The chain runs to 363 residues: Pyrimidine monooxygenase RutA (363 aa).

FMN contacts are provided by residues 49–50, Asn115, Glu124, 140–141, and Ser190; these read IK and RY.

It belongs to the NtaA/SnaA/DszA monooxygenase family. RutA subfamily.

The enzyme catalyses uracil + FMNH2 + NADH + O2 = (Z)-3-ureidoacrylate + FMN + NAD(+) + H2O + H(+). The catalysed reaction is thymine + FMNH2 + NADH + O2 = (Z)-2-methylureidoacrylate + FMN + NAD(+) + H2O + H(+). Functionally, catalyzes the pyrimidine ring opening between N-3 and C-4 by an unusual flavin hydroperoxide-catalyzed mechanism, adding oxygen atoms in the process to yield ureidoacrylate peracid, that immediately reacts with FMN forming ureidoacrylate and FMN-N(5)-oxide. The FMN-N(5)-oxide reacts spontaneously with NADH to produce FMN. Requires the flavin reductase RutF to regenerate FMN in vivo. The polypeptide is Pyrimidine monooxygenase RutA (Enterobacter cloacae subsp. cloacae (strain ATCC 13047 / DSM 30054 / NBRC 13535 / NCTC 10005 / WDCM 00083 / NCDC 279-56)).